The following is a 290-amino-acid chain: L-proline cis-3-hydroxylase 2 (290 aa).

Fe cation-binding residues include histidine 107, aspartate 109, and histidine 158. Arginine 168 is a 2-oxoglutarate binding site.

The protein belongs to the L-proline cis-4-/cis-3-hydroxylase family. In terms of assembly, homodimer. Requires Fe(2+) as cofactor.

The catalysed reaction is L-proline + 2-oxoglutarate + O2 = cis-3-hydroxy-L-proline + succinate + CO2. Inhibited by metal ions such as Co(2+), Zn(2+), Ni(2+) or Cu(2+). Is also inhibited by EDTA in vitro. Dioxygenase that catalyzes the 2-oxoglutarate-dependent selective hydroxylation of free L-proline to cis-3-hydroxy-L-proline (cis-3-Hyp). This Streptomyces sp protein is L-proline cis-3-hydroxylase 2.